Consider the following 254-residue polypeptide: Ubiquinone biosynthesis O-methyltransferase (254 aa).

Residues Arg-47, Gly-76, Asp-97, and Leu-141 each contribute to the S-adenosyl-L-methionine site.

It belongs to the methyltransferase superfamily. UbiG/COQ3 family.

It carries out the reaction a 3-demethylubiquinol + S-adenosyl-L-methionine = a ubiquinol + S-adenosyl-L-homocysteine + H(+). The catalysed reaction is a 3-(all-trans-polyprenyl)benzene-1,2-diol + S-adenosyl-L-methionine = a 2-methoxy-6-(all-trans-polyprenyl)phenol + S-adenosyl-L-homocysteine + H(+). The protein operates within cofactor biosynthesis; ubiquinone biosynthesis. O-methyltransferase that catalyzes the 2 O-methylation steps in the ubiquinone biosynthetic pathway. The chain is Ubiquinone biosynthesis O-methyltransferase from Maricaulis maris (strain MCS10) (Caulobacter maris).